Here is a 174-residue protein sequence, read N- to C-terminus: MSKVFLLLVLSVFALVSCDALSAPVGSKLSLSKTDELNAQPIDAKRMLRAQEEPTNAADEERGMTELANKFKAWAAAIKTWVTNSKLVQSMNNKLASLTQKGRVGQIEKLLKQDNVNVNVLYQNKVKPDELFLALKLDPKLKLIADAPAAWANNPGLSMFYQYATYYAKMTTKA.

The N-terminal stretch at 1–20 is a signal peptide; that stretch reads MSKVFLLLVLSVFALVSCDA. A RxLR-dEER motif is present at residues 46 to 62; it reads RMLRAQEEPTNAADEER. Positions 82 to 99 are disordered; sequence VTNSKLVQSMNNKLASLT.

The protein belongs to the RxLR effector family. In terms of assembly, interacts with Nicotiana benthamiana ACD11, BPA1 (binding partner of ACD11), as well as BPA-like proteins BPL1, BPL2, BPL3 and BPL4.

It localises to the secreted. The protein resides in the host cell membrane. In terms of biological role, secreted effector that activates ROS-mediated cell death in plant host and is essential for virulence. Plays a role in the transition from the biotrophic to necrotrophic stage. Associates with and promotes the degradation of Nicotiana benthamiana BPA1, BPL1, BPL2, and BPL4 to disrupt ACD11 stabilization in a 26S proteasome-dependent manner. This chain is RxLR effector protein 207, found in Phytophthora capsici.